Here is a 176-residue protein sequence, read N- to C-terminus: HTH-type transcriptional regulator DctR (176 aa).

The region spanning 109–174 is the HTH luxR-type domain; the sequence is VPEANVSLSR…ELVRHQHIDY (66 aa). The segment at residues 133 to 152 is a DNA-binding region (H-T-H motif); sequence TEDILEKLKISLKTFYCHKH.

In terms of biological role, may act as a transcriptional regulator of dctA. The sequence is that of HTH-type transcriptional regulator DctR (dctR) from Shigella flexneri.